The following is a 256-amino-acid chain: Mediator of RNA polymerase II transcription subunit 7 (256 aa).

Disordered stretches follow at residues 1 to 20 (MEEG…PPPF) and 208 to 244 (EAEG…NGEQ). Residues 223 to 242 (TPESGPHNTKTQTSESQANG) show a composition bias toward polar residues.

This sequence belongs to the Mediator complex subunit 7 family. As to quaternary structure, component of the Mediator complex.

It localises to the nucleus. Functionally, component of the Mediator complex, a coactivator involved in the regulated transcription of nearly all RNA polymerase II-dependent genes. Mediator functions as a bridge to convey information from gene-specific regulatory proteins to the basal RNA polymerase II transcription machinery. Mediator is recruited to promoters by direct interactions with regulatory proteins and serves as a scaffold for the assembly of a functional preinitiation complex with RNA polymerase II and the general transcription factors. This Coccidioides immitis (strain RS) (Valley fever fungus) protein is Mediator of RNA polymerase II transcription subunit 7 (MED7).